The following is a 258-amino-acid chain: Glutathione S-transferase DHAR3, chloroplastic (258 aa).

A chloroplast-targeting transit peptide spans 1–42 (MISLRFQPSTTAGVLSASVSRAGFIKRCGSTKPGRVGRFVTM). At C52 the chain carries S-glutathionyl cysteine. Glutathione contacts are provided by K54 and D65. L-ascorbate is bound by residues K54 and D65. The GST N-terminal domain occupies 56–129 (SITTPNKLGD…DVITQALEEK (74 aa)). C66 serves as the catalytic Nucleophile. C66 and C69 are joined by a disulfide. A Glutathione-binding motif is present at residues 66 to 71 (CPFCQK). Residues K93, V106, S119, H205, and W252 each contribute to the glutathione site. Positions 130 to 258 (YPEPPLATPP…IAGWRPKVMG (129 aa)) constitute a GST C-terminal domain. Position 255 (K255) interacts with L-ascorbate.

It belongs to the GST superfamily. DHAR family. As to quaternary structure, monomer. Interacts with TRX3. Post-translationally, partial S-glutathionylation and intramolecular disulfide bond formation between Cys-66 and Cys-69 in the presence of oxidized glutathione (GSSG). Could be reduced by TRX-dependent process.

The protein localises to the plastid. It localises to the chloroplast stroma. The enzyme catalyses RX + glutathione = an S-substituted glutathione + a halide anion + H(+). It carries out the reaction L-dehydroascorbate + 2 glutathione = glutathione disulfide + L-ascorbate. In terms of biological role, displays a dual function. As a soluble protein, exhibits glutathione-dependent thiol transferase and dehydroascorbate (DHA) reductase activities. Key component of the ascorbate recycling system. Involved in the redox homeostasis, especially in scavenging of ROS under oxidative stresses. This is Glutathione S-transferase DHAR3, chloroplastic (DHAR3) from Arabidopsis thaliana (Mouse-ear cress).